The sequence spans 290 residues: 4-hydroxy-tetrahydrodipicolinate synthase (290 aa).

T44 lines the pyruvate pocket. Catalysis depends on Y132, which acts as the Proton donor/acceptor. The Schiff-base intermediate with substrate role is filled by K160. Position 202 (I202) interacts with pyruvate.

The protein belongs to the DapA family. As to quaternary structure, homotetramer; dimer of dimers.

It localises to the cytoplasm. It catalyses the reaction L-aspartate 4-semialdehyde + pyruvate = (2S,4S)-4-hydroxy-2,3,4,5-tetrahydrodipicolinate + H2O + H(+). Its pathway is amino-acid biosynthesis; L-lysine biosynthesis via DAP pathway; (S)-tetrahydrodipicolinate from L-aspartate: step 3/4. Catalyzes the condensation of (S)-aspartate-beta-semialdehyde [(S)-ASA] and pyruvate to 4-hydroxy-tetrahydrodipicolinate (HTPA). The sequence is that of 4-hydroxy-tetrahydrodipicolinate synthase from Cereibacter sphaeroides (strain ATCC 17025 / ATH 2.4.3) (Rhodobacter sphaeroides).